The primary structure comprises 212 residues: Phosphatidylserine decarboxylase proenzyme (212 aa).

Catalysis depends on S182, which acts as the Schiff-base intermediate with substrate; via pyruvic acid. S182 carries the pyruvic acid (Ser); by autocatalysis modification.

The protein belongs to the phosphatidylserine decarboxylase family. PSD-A subfamily. Heterodimer of a large membrane-associated beta subunit and a small pyruvoyl-containing alpha subunit. Pyruvate is required as a cofactor. In terms of processing, is synthesized initially as an inactive proenzyme. Formation of the active enzyme involves a self-maturation process in which the active site pyruvoyl group is generated from an internal serine residue via an autocatalytic post-translational modification. Two non-identical subunits are generated from the proenzyme in this reaction, and the pyruvate is formed at the N-terminus of the alpha chain, which is derived from the carboxyl end of the proenzyme. The post-translation cleavage follows an unusual pathway, termed non-hydrolytic serinolysis, in which the side chain hydroxyl group of the serine supplies its oxygen atom to form the C-terminus of the beta chain, while the remainder of the serine residue undergoes an oxidative deamination to produce ammonia and the pyruvoyl prosthetic group on the alpha chain.

It is found in the cell membrane. It catalyses the reaction a 1,2-diacyl-sn-glycero-3-phospho-L-serine + H(+) = a 1,2-diacyl-sn-glycero-3-phosphoethanolamine + CO2. It functions in the pathway phospholipid metabolism; phosphatidylethanolamine biosynthesis; phosphatidylethanolamine from CDP-diacylglycerol: step 2/2. Functionally, catalyzes the formation of phosphatidylethanolamine (PtdEtn) from phosphatidylserine (PtdSer). The chain is Phosphatidylserine decarboxylase proenzyme from Paraburkholderia phymatum (strain DSM 17167 / CIP 108236 / LMG 21445 / STM815) (Burkholderia phymatum).